The following is a 398-amino-acid chain: Transcription termination factor 1, mitochondrial (398 aa).

The transit peptide at 1–57 directs the protein to the mitochondrion; that stretch reads MQSLSLGQTSISKGLNYLTIMAPGNLWHMRNNFLFGSRCWMTRFSAENIFKSVSFRL. Interaction with DNA regions lie at residues 169-170, 246-250, 323-330, 354-357, and 383-390; these read RS, QSTKR, AEKKFNDK, SIST, and SKKRYEAK.

It belongs to the mTERF family. As to quaternary structure, monomer. Phosphoprotein with mostly four phosphate groups. While the DNA-binding activity is unaffected by the phosphorylation state, only the phosphorylated form of the protein is active for termination activity. Functioning seems to be regulated by phosphorylation.

The protein localises to the mitochondrion. Functionally, transcription termination factor. Binds to a 28 bp region within the tRNA(Leu(uur)) gene at a position immediately adjacent to and downstream of the 16S rRNA gene; this region comprises a tridecamer sequence critical for directing accurate termination. Binds DNA along the major grove and promotes DNA bending and partial unwinding. Promotes base flipping. Transcription termination activity appears to be polarized with highest specificity for transcripts initiated on the light strand. This is Transcription termination factor 1, mitochondrial (MTERF1) from Pongo abelii (Sumatran orangutan).